A 282-amino-acid polypeptide reads, in one-letter code: Armadillo repeat-containing protein 1 (282 aa).

Met-1 is modified (N-acetylmethionine). Residues Gly-39 to Gly-81 form an ARM repeat. Residue Thr-137 is modified to Phosphothreonine. Residues Ser-189, Ser-246, Ser-260, and Ser-267 each carry the phosphoserine modification. A disordered region spans residues Asp-239–His-261. Over residues Ser-246–Val-255 the composition is skewed to basic and acidic residues.

Interacts with mitochondrial contact site and cristae organizing system (MICOS) complex components IMMT/MIC60 and MICOS10/MIC10. Interacts with mitochondrial outer membrane sorting assembly machinery (SAM) complex components SAMM50 and MTX1.

It is found in the cytoplasm. The protein resides in the mitochondrion. Its subcellular location is the mitochondrion outer membrane. Functionally, in association with mitochondrial contact site and cristae organizing system (MICOS) complex components and mitochondrial outer membrane sorting assembly machinery (SAM) complex components may regulate mitochondrial dynamics playing a role in determining mitochondrial length, distribution and motility. This Pongo abelii (Sumatran orangutan) protein is Armadillo repeat-containing protein 1 (ARMC1).